Reading from the N-terminus, the 607-residue chain is UvrABC system protein C (607 aa).

Residues G16 to I94 enclose the GIY-YIG domain. One can recognise a UVR domain in the interval H203–V238.

It belongs to the UvrC family. In terms of assembly, interacts with UvrB in an incision complex.

It localises to the cytoplasm. Functionally, the UvrABC repair system catalyzes the recognition and processing of DNA lesions. UvrC both incises the 5' and 3' sides of the lesion. The N-terminal half is responsible for the 3' incision and the C-terminal half is responsible for the 5' incision. This Pseudomonas fluorescens (strain Pf0-1) protein is UvrABC system protein C.